A 603-amino-acid polypeptide reads, in one-letter code: Elongation factor 4 (603 aa).

Residues 5–187 (RHIRNFCIIA…AVVNFVPPPK (183 aa)) form the tr-type G domain. Residues 17–22 (DHGKST) and 134–137 (NKID) contribute to the GTP site.

It belongs to the TRAFAC class translation factor GTPase superfamily. Classic translation factor GTPase family. LepA subfamily.

The protein localises to the cell membrane. The catalysed reaction is GTP + H2O = GDP + phosphate + H(+). Functionally, required for accurate and efficient protein synthesis under certain stress conditions. May act as a fidelity factor of the translation reaction, by catalyzing a one-codon backward translocation of tRNAs on improperly translocated ribosomes. Back-translocation proceeds from a post-translocation (POST) complex to a pre-translocation (PRE) complex, thus giving elongation factor G a second chance to translocate the tRNAs correctly. Binds to ribosomes in a GTP-dependent manner. The polypeptide is Elongation factor 4 (Symbiobacterium thermophilum (strain DSM 24528 / JCM 14929 / IAM 14863 / T)).